Here is a 211-residue protein sequence, read N- to C-terminus: Small ribosomal subunit protein uS3 (211 aa).

Positions 38–106 (LRNFLKKRLF…EIYLNIQEVR (69 aa)) constitute a KH type-2 domain.

The protein belongs to the universal ribosomal protein uS3 family. In terms of assembly, part of the 30S ribosomal subunit. Forms a tight complex with proteins S10 and S14.

Its function is as follows. Binds the lower part of the 30S subunit head. Binds mRNA in the 70S ribosome, positioning it for translation. This is Small ribosomal subunit protein uS3 from Geobacter metallireducens (strain ATCC 53774 / DSM 7210 / GS-15).